The following is a 136-amino-acid chain: MARTKQTARKSTSIKAPRKQLAAKAARKSAPISGGIKKPHKFRPGTVALREIRKYQKTTDLLIRKLPFQRLVRDIAMEMKSDIRFQSQAILALQEAAEAYLVGLFEDTNLCAIHARRVTIMTKDLHLARRIRGERF.

Residues 1–41 (MARTKQTARKSTSIKAPRKQLAAKAARKSAPISGGIKKPHK) form a disordered region.

This sequence belongs to the histone H3 family. As to quaternary structure, the nucleosome is a histone octamer containing two molecules each of H2A, H2B, H3 and H4 assembled in one H3-H4 heterotetramer and two H2A-H2B heterodimers. The octamer wraps approximately 147 bp of DNA.

Its subcellular location is the nucleus. The protein resides in the chromosome. Functionally, macronuclear replacement variant which replaces conventional H3 in a subset of nucleosomes. Nucleosomes wrap and compact DNA into chromatin, limiting DNA accessibility to the cellular machineries which require DNA as a template. Histones thereby play a central role in transcription regulation, DNA repair, DNA replication and chromosomal stability. DNA accessibility is regulated via a complex set of post-translational modifications of histones, also called histone code, and nucleosome remodeling. Functions redundantly to H3.3. H3.4 deposition is mainly transcription-associated, DNA replication-independent. Although not essential for vegetative growth, minor H3 variants are required for producing viable conjugation progeny by affecting late developmental stages of conjugation. The chain is Histone H3.4 (HHT4) from Tetrahymena thermophila (strain SB210).